The sequence spans 429 residues: Enolase (429 aa).

Glutamine 163 lines the (2R)-2-phosphoglycerate pocket. Glutamate 205 acts as the Proton donor in catalysis. The Mg(2+) site is built by aspartate 242, glutamate 287, and aspartate 314. Residues lysine 339, arginine 368, serine 369, and lysine 390 each contribute to the (2R)-2-phosphoglycerate site. Lysine 339 acts as the Proton acceptor in catalysis.

It belongs to the enolase family. As to quaternary structure, homooctamer. Mg(2+) is required as a cofactor.

It is found in the cytoplasm. It localises to the secreted. The protein resides in the cell surface. The enzyme catalyses (2R)-2-phosphoglycerate = phosphoenolpyruvate + H2O. Its pathway is carbohydrate degradation; glycolysis; pyruvate from D-glyceraldehyde 3-phosphate: step 4/5. In terms of biological role, catalyzes the reversible conversion of 2-phosphoglycerate (2-PG) into phosphoenolpyruvate (PEP). It is essential for the degradation of carbohydrates via glycolysis. The polypeptide is Enolase (Zymomonas mobilis subsp. mobilis (strain ATCC 31821 / ZM4 / CP4)).